A 477-amino-acid chain; its full sequence is Beta-agarase D (477 aa).

The first 20 residues, 1-20 (MKRSILLAIIAFLQFFTSYG), serve as a signal peptide directing secretion. The GH16 domain occupies 22-378 (YDWDNVPIPA…WIRVYKPVNA (357 aa)). Residues 94–104 (MQNHVAVSGGN), 123–125 (NNT), Glu174, Glu179, Arg206, and Glu340 each bind substrate. Glu174 (nucleophile) is an active-site residue. Residue Glu179 is the Proton donor of the active site. Residues 382 to 391 (NSAETTSTVE) are compositionally biased toward low complexity. The tract at residues 382 to 402 (NSAETTSTVEKPASFEPQGQP) is disordered.

It belongs to the glycosyl hydrolase 16 family.

The protein localises to the secreted. It catalyses the reaction Hydrolysis of (1-&gt;4)-beta-D-galactosidic linkages in agarose, giving the tetramer as the predominant product.. In terms of biological role, cleaves the beta-1,4-linkages between beta-D-galactose and alpha-L-3,6-anhydro-galactose residues in agarose. Cleaves agarose in a random manner with retention of the anomeric-bond configuration, producing beta-anomers that give rise progressively to alpha-anomers when mutarotation takes place. Requires at least 4 consecutive agarose units and is highly intolerant to modifications. In Zobellia galactanivorans (strain DSM 12802 / CCUG 47099 / CIP 106680 / NCIMB 13871 / Dsij), this protein is Beta-agarase D (agaD).